We begin with the raw amino-acid sequence, 842 residues long: Outer membrane usher protein AggC (842 aa).

Positions 1-21 are cleaved as a signal peptide; the sequence is MKTSSFIIVILLCFRIENVIA. Cysteines 819 and 841 form a disulfide.

It belongs to the fimbrial export usher family.

The protein localises to the cell outer membrane. Functionally, involved in the export and assembly of the AAF/I fimbriae subunits across the outer membrane. This is Outer membrane usher protein AggC (aggC) from Escherichia coli.